The sequence spans 703 residues: Centrosomal protein of 63 kDa (703 aa).

Methionine 1 carries the N-acetylmethionine modification. Coiled coils occupy residues 22 to 199, 242 to 306, 353 to 533, and 676 to 703; these read EAEL…ESVE, MTVL…QHAV, LEGS…STQM, and HILE…TALK. A Phosphoserine modification is found at serine 278.

It belongs to the CEP63 family. Interacts with CEP152 and CDK1; these interactions recruit both ligands to centrosomes. Interacts with CDK2, CDK5RAP2, WDR62, CEP90, KIAA0753/moonraker and CCDC14. CEP63, CDK5RAP2, CEP152, WDR62 are proposed to form a stepwise assembled complex at the centrosome forming a ring near parental centrioles. Interacts with CCDC57; the interaction is required for their location to proximal end of centrioles. Interacts with FXR1; promoting its stabilization. As to quaternary structure, (Microbial infection) Interacts with zika virus serine protease NS3; this interaction disorganizes the centrosome. Polyubiquitinated via 'Lys-48'-linked ubiquitin, leading to its degradation. Deubiquitinated by USP36, promoting its stabilization.

It localises to the cytoplasm. It is found in the cytoskeleton. The protein resides in the microtubule organizing center. Its subcellular location is the centrosome. The protein localises to the centriole. It localises to the centriolar satellite. In terms of biological role, required for normal spindle assembly. Plays a key role in mother-centriole-dependent centriole duplication; the function seems also to involve CEP152, CDK5RAP2 and WDR62 through a stepwise assembled complex at the centrosome that recruits CDK2 required for centriole duplication. Reported to be required for centrosomal recruitment of CEP152; however, this function has been questioned. Also recruits CDK1 to centrosomes. Plays a role in DNA damage response. Following DNA damage, such as double-strand breaks (DSBs), is removed from centrosomes; this leads to the inactivation of spindle assembly and delay in mitotic progression. Promotes stabilization of FXR1 protein by inhibiting FXR1 ubiquitination. The polypeptide is Centrosomal protein of 63 kDa (Homo sapiens (Human)).